The chain runs to 352 residues: Anthranilate phosphoribosyltransferase (352 aa).

5-phospho-alpha-D-ribose 1-diphosphate contacts are provided by residues Gly-83, Gly-86 to Asp-87, Thr-91, Asn-93 to Thr-96, Lys-111 to Ser-119, and Ala-123. Gly-83 is an anthranilate binding site. Ser-95 is a Mg(2+) binding site. Residue Arg-169 coordinates anthranilate. Mg(2+) contacts are provided by Asp-228 and Glu-229.

This sequence belongs to the anthranilate phosphoribosyltransferase family. Homodimer. It depends on Mg(2+) as a cofactor.

The catalysed reaction is N-(5-phospho-beta-D-ribosyl)anthranilate + diphosphate = 5-phospho-alpha-D-ribose 1-diphosphate + anthranilate. It functions in the pathway amino-acid biosynthesis; L-tryptophan biosynthesis; L-tryptophan from chorismate: step 2/5. Its function is as follows. Catalyzes the transfer of the phosphoribosyl group of 5-phosphorylribose-1-pyrophosphate (PRPP) to anthranilate to yield N-(5'-phosphoribosyl)-anthranilate (PRA). The chain is Anthranilate phosphoribosyltransferase from Neisseria meningitidis serogroup C (strain 053442).